The primary structure comprises 497 residues: uncharacterized protein (497 aa).

Residues 474-497 (DPRNPFSNGKPSGWSDEDVAWLKR) form a disordered region. Over residues 488–497 (SDEDVAWLKR) the composition is skewed to acidic residues.

This is an uncharacterized protein from Bacillus anthracis.